A 550-amino-acid chain; its full sequence is MTRYIFITGGVVSSLGKGLASAALGALLQARGYKVRLRKLDPYLNVDPGTMSPYQHGEVFVTDDGAETDLDLGHYERFTGVSATKADNITTGQIYKTIIEKERRGDYLGATVQVIPHVTNEIKDFVLSPAMDETGEKAVDFVLVEIGGTVGDIEGLPFFEAIRQLRQDLPRGQSCYVHLTLLPFIKTAGEMKTKPTQHSVKELRSIGIQPDILLCRCEQEIPPEEKRKIAQFCNVRPSAVIQAMDSSSIYAVPIDYHEQGLDAEVLDVFGMRDAPAPDLTRWKTIDDTVQHPDGEVTIAVVGKYTVLKDAYKSLIEALHHGGLANKVKVNLDWVESETFEGDEGAAAARLENAHAIMVPGGFGERGAEGKIRAAQFARERKVPYFGICFGMQMAVIETLRNVAGIKDASSSEFGPTERPVVGIMTEWIKGNETVQRRANDDLGGTMRLGAYDAVLTAGSKIAEIYGATEISERHRHRYEVNIGYVHLMEDAGLKLTGRSPNGVLPEIVERDDHPWFIGVQYHPELKSRPFAPHPLFASFIAAAKEHGRLV.

The tract at residues 1 to 271 (MTRYIFITGG…DAEVLDVFGM (271 aa)) is amidoligase domain. A CTP-binding site is contributed by Ser-13. A UTP-binding site is contributed by Ser-13. 14–19 (SLGKGL) serves as a coordination point for ATP. Tyr-54 is a binding site for L-glutamine. ATP is bound at residue Asp-71. 2 residues coordinate Mg(2+): Asp-71 and Glu-145. CTP-binding positions include 152-154 (DIE), 192-197 (KTKPTQ), and Lys-228. UTP-binding positions include 192 to 197 (KTKPTQ) and Lys-228. The Glutamine amidotransferase type-1 domain maps to 297-549 (TIAVVGKYTV…IAAAKEHGRL (253 aa)). Gly-361 is an L-glutamine binding site. The active-site Nucleophile; for glutamine hydrolysis is the Cys-388. Residues 389–392 (FGMQ), Glu-412, and Arg-477 each bind L-glutamine. Catalysis depends on residues His-522 and Glu-524.

This sequence belongs to the CTP synthase family. In terms of assembly, homotetramer.

It catalyses the reaction UTP + L-glutamine + ATP + H2O = CTP + L-glutamate + ADP + phosphate + 2 H(+). The enzyme catalyses L-glutamine + H2O = L-glutamate + NH4(+). The catalysed reaction is UTP + NH4(+) + ATP = CTP + ADP + phosphate + 2 H(+). It participates in pyrimidine metabolism; CTP biosynthesis via de novo pathway; CTP from UDP: step 2/2. With respect to regulation, allosterically activated by GTP, when glutamine is the substrate; GTP has no effect on the reaction when ammonia is the substrate. The allosteric effector GTP functions by stabilizing the protein conformation that binds the tetrahedral intermediate(s) formed during glutamine hydrolysis. Inhibited by the product CTP, via allosteric rather than competitive inhibition. In terms of biological role, catalyzes the ATP-dependent amination of UTP to CTP with either L-glutamine or ammonia as the source of nitrogen. Regulates intracellular CTP levels through interactions with the four ribonucleotide triphosphates. The chain is CTP synthase from Caulobacter vibrioides (strain ATCC 19089 / CIP 103742 / CB 15) (Caulobacter crescentus).